Here is a 47-residue protein sequence, read N- to C-terminus: Large ribosomal subunit protein bL34 (47 aa).

This sequence belongs to the bacterial ribosomal protein bL34 family.

This Mycobacterium tuberculosis (strain ATCC 25177 / H37Ra) protein is Large ribosomal subunit protein bL34.